Consider the following 254-residue polypeptide: MAAISMKQLLEAGVHFGHQTRRWNPKMKKYIFTERNGIYIIDLQKTVKKVDEAYNYVKEIASNGGTILFVGTKKQAQDSVRDEAIRSGMYFVNQRWLGGTLTNFQTIRKRINRLKSIEKMEEDGTFEVLPKKEVVNLLKEKERLVKFLGGIKEMNKLPDALFVIDPRKERIAIAEAHKLNIPIIGIVDTNCDPDEIDYVIPANDDAIRAVKLLTSKMADAILEVKQGEETEVVEEEANEAVAEEEAAEEVSTQE.

The protein belongs to the universal ribosomal protein uS2 family.

This Oceanobacillus iheyensis (strain DSM 14371 / CIP 107618 / JCM 11309 / KCTC 3954 / HTE831) protein is Small ribosomal subunit protein uS2.